A 452-amino-acid polypeptide reads, in one-letter code: Phosphoglucosamine mutase (452 aa).

Residue Ser-103 is the Phosphoserine intermediate of the active site. Mg(2+) is bound by residues Ser-103, Asp-244, Asp-246, and Asp-248. Ser-103 carries the post-translational modification Phosphoserine.

It belongs to the phosphohexose mutase family. Mg(2+) is required as a cofactor. Post-translationally, activated by phosphorylation.

It catalyses the reaction alpha-D-glucosamine 1-phosphate = D-glucosamine 6-phosphate. Functionally, catalyzes the conversion of glucosamine-6-phosphate to glucosamine-1-phosphate. The protein is Phosphoglucosamine mutase of Rhodospirillum rubrum (strain ATCC 11170 / ATH 1.1.1 / DSM 467 / LMG 4362 / NCIMB 8255 / S1).